The chain runs to 1405 residues: DNA-directed RNA polymerase subunit beta' (1405 aa).

Zn(2+)-binding residues include C70, C72, C85, and C88. Mg(2+) is bound by residues D460, D462, and D464. C815, C890, C897, and C900 together coordinate Zn(2+).

This sequence belongs to the RNA polymerase beta' chain family. In terms of assembly, the RNAP catalytic core consists of 2 alpha, 1 beta, 1 beta' and 1 omega subunit. When a sigma factor is associated with the core the holoenzyme is formed, which can initiate transcription. The cofactor is Mg(2+). Requires Zn(2+) as cofactor.

It carries out the reaction RNA(n) + a ribonucleoside 5'-triphosphate = RNA(n+1) + diphosphate. Functionally, DNA-dependent RNA polymerase catalyzes the transcription of DNA into RNA using the four ribonucleoside triphosphates as substrates. In Xanthomonas campestris pv. campestris (strain B100), this protein is DNA-directed RNA polymerase subunit beta'.